We begin with the raw amino-acid sequence, 537 residues long: Cytochrome P450 4F6 (537 aa).

Cys468 provides a ligand contact to heme.

It belongs to the cytochrome P450 family. It depends on heme as a cofactor. In terms of tissue distribution, high expression in liver and kidney. Lower expression in brain.

The protein localises to the endoplasmic reticulum membrane. The protein resides in the microsome membrane. The enzyme catalyses an organic molecule + reduced [NADPH--hemoprotein reductase] + O2 = an alcohol + oxidized [NADPH--hemoprotein reductase] + H2O + H(+). This chain is Cytochrome P450 4F6 (Cyp4f6), found in Rattus norvegicus (Rat).